Here is a 300-residue protein sequence, read N- to C-terminus: Ribosomal protein L11 methyltransferase (300 aa).

Positions 141, 164, 186, and 233 each coordinate S-adenosyl-L-methionine.

This sequence belongs to the methyltransferase superfamily. PrmA family.

It is found in the cytoplasm. The catalysed reaction is L-lysyl-[protein] + 3 S-adenosyl-L-methionine = N(6),N(6),N(6)-trimethyl-L-lysyl-[protein] + 3 S-adenosyl-L-homocysteine + 3 H(+). In terms of biological role, methylates ribosomal protein L11. This is Ribosomal protein L11 methyltransferase from Synechocystis sp. (strain ATCC 27184 / PCC 6803 / Kazusa).